The chain runs to 449 residues: Allantoinase (449 aa).

Positions 61, 63, 148, 184, 240, and 313 each coordinate Zn(2+). Lysine 148 carries the post-translational modification N6-carboxylysine.

Belongs to the metallo-dependent hydrolases superfamily. Allantoinase family. As to quaternary structure, homotetramer. Zn(2+) serves as cofactor. Post-translationally, carboxylation allows a single lysine to coordinate two zinc ions.

The enzyme catalyses (S)-allantoin + H2O = allantoate + H(+). The protein operates within nitrogen metabolism; (S)-allantoin degradation; allantoate from (S)-allantoin: step 1/1. In terms of biological role, catalyzes the conversion of allantoin (5-ureidohydantoin) to allantoic acid by hydrolytic cleavage of the five-member hydantoin ring. In Desulfitobacterium hafniense (strain DSM 10664 / DCB-2), this protein is Allantoinase.